The primary structure comprises 95 residues: Aspartyl/glutamyl-tRNA(Asn/Gln) amidotransferase subunit C (95 aa).

It belongs to the GatC family. In terms of assembly, heterotrimer of A, B and C subunits.

The enzyme catalyses L-glutamyl-tRNA(Gln) + L-glutamine + ATP + H2O = L-glutaminyl-tRNA(Gln) + L-glutamate + ADP + phosphate + H(+). It catalyses the reaction L-aspartyl-tRNA(Asn) + L-glutamine + ATP + H2O = L-asparaginyl-tRNA(Asn) + L-glutamate + ADP + phosphate + 2 H(+). In terms of biological role, allows the formation of correctly charged Asn-tRNA(Asn) or Gln-tRNA(Gln) through the transamidation of misacylated Asp-tRNA(Asn) or Glu-tRNA(Gln) in organisms which lack either or both of asparaginyl-tRNA or glutaminyl-tRNA synthetases. The reaction takes place in the presence of glutamine and ATP through an activated phospho-Asp-tRNA(Asn) or phospho-Glu-tRNA(Gln). In Geobacter metallireducens (strain ATCC 53774 / DSM 7210 / GS-15), this protein is Aspartyl/glutamyl-tRNA(Asn/Gln) amidotransferase subunit C.